Reading from the N-terminus, the 218-residue chain is Lipoprotein-releasing system ATP-binding protein LolD (218 aa).

The ABC transporter domain occupies 2-218; that stretch reads IKLEGITKSF…HMVDGTIKKD (217 aa). 34–41 is a binding site for ATP; that stretch reads GPSGAGKT.

The protein belongs to the ABC transporter superfamily. Lipoprotein translocase (TC 3.A.1.125) family. As to quaternary structure, the complex is composed of two ATP-binding proteins (LolD) and two transmembrane proteins (LolC and LolE).

It localises to the cell inner membrane. Functionally, part of the ABC transporter complex LolCDE involved in the translocation of mature outer membrane-directed lipoproteins, from the inner membrane to the periplasmic chaperone, LolA. Responsible for the formation of the LolA-lipoprotein complex in an ATP-dependent manner. The polypeptide is Lipoprotein-releasing system ATP-binding protein LolD (Bacteroides thetaiotaomicron (strain ATCC 29148 / DSM 2079 / JCM 5827 / CCUG 10774 / NCTC 10582 / VPI-5482 / E50)).